Consider the following 172-residue polypeptide: Bone marrow stromal antigen 2 (172 aa).

The Cytoplasmic segment spans residues 1 to 30 (MAPSFYHYLPVPMDEMGGKQGWGSHRQWLG). The chain crosses the membrane as a helical; Signal-anchor for type II membrane protein span at residues 31-51 (AAILVVLFGVTLVILTIYFAV). Over 52–152 (TANSVACRDG…ETSSTVQVNS (101 aa)) the chain is Extracellular. N-linked (GlcNAc...) asparagine glycosylation is present at Asn-70. Residues 74-147 (LLQRQLTRTQ…LRIQKETSST (74 aa)) adopt a coiled-coil conformation. Asn-94 is a glycosylation site (N-linked (GlcNAc...) asparagine; atypical). Asn-97 carries an N-linked (GlcNAc...) asparagine glycan. Ser-152 carries GPI-anchor amidated serine lipidation. A propeptide spans 153–172 (GSSMVVSSLLVLKVSLFLLF) (removed in mature form).

As to quaternary structure, parallel homodimer; disulfide-linked. May form homotetramers under reducing conditions. Isoform 1 and isoform 2 form homodimers and also heterodimers with each other. Dimerization is essential for its antiviral activity. Interacts (via cytoplasmic domain) with ARHGAP44. Interacts with MMP14 (via C-terminal cytoplasmic tail). Interacts with LILRA4/ILT7. Interacts with RNF115. As to expression, in naive mice, specifically expressed on type I interferon-producing cells (at protein level).

The protein localises to the golgi apparatus. Its subcellular location is the trans-Golgi network. It localises to the cell membrane. The protein resides in the late endosome. It is found in the membrane raft. The protein localises to the cytoplasm. Its subcellular location is the apical cell membrane. Its function is as follows. IFN-induced antiviral host restriction factor which efficiently blocks the release of diverse mammalian enveloped viruses by directly tethering nascent virions to the membranes of infected cells. Acts as a direct physical tether, holding virions to the cell membrane and linking virions to each other. The tethered virions can be internalized by endocytosis and subsequently degraded or they can remain on the cell surface. In either case, their spread as cell-free virions is restricted. Its target viruses belong to diverse families, including retroviridae: human immunodeficiency virus type 1 (HIV-1), mouse mammary tumor virus (MMTV) and murine leukemia virus (MLV), filoviridae: ebola virus (EBOV), arenaviridae: lassa virus (LASV), and rhabdoviridae: vesicular stomatitis virus (VSV). Can inhibit cell surface proteolytic activity of MMP14 causing decreased activation of MMP15 which results in inhibition of cell growth and migration. Can stimulate signaling by LILRA4/ILT7 and consequently provide negative feedback to the production of IFN by plasmacytoid dendritic cells in response to viral infection. Plays a role in the organization of the subapical actin cytoskeleton in polarized epithelial cells. The polypeptide is Bone marrow stromal antigen 2 (Bst2) (Mus musculus (Mouse)).